A 599-amino-acid polypeptide reads, in one-letter code: Elongation factor 4 (599 aa).

The tr-type G domain maps to 5-187; that stretch reads DLIRNFSIVA…AIVTRLPPPK (183 aa). GTP contacts are provided by residues 17–22 and 134–137; these read DHGKST and NKID.

The protein belongs to the TRAFAC class translation factor GTPase superfamily. Classic translation factor GTPase family. LepA subfamily.

The protein resides in the cell inner membrane. The catalysed reaction is GTP + H2O = GDP + phosphate + H(+). Functionally, required for accurate and efficient protein synthesis under certain stress conditions. May act as a fidelity factor of the translation reaction, by catalyzing a one-codon backward translocation of tRNAs on improperly translocated ribosomes. Back-translocation proceeds from a post-translocation (POST) complex to a pre-translocation (PRE) complex, thus giving elongation factor G a second chance to translocate the tRNAs correctly. Binds to ribosomes in a GTP-dependent manner. The polypeptide is Elongation factor 4 (Cereibacter sphaeroides (strain ATCC 17025 / ATH 2.4.3) (Rhodobacter sphaeroides)).